A 725-amino-acid chain; its full sequence is MADKEATVYVIDLGESMADCHNGRNESDLEFGMRYIWDKITTTVAASRKTWNVGVVGLNTDETNNNENREEYQGYENISVLQELGPMTMASLRALKSKIEPSSTSSADAISAIVVALRMIQTFTKKLKYKRKIIVVTNGESPIDDDQSEEVANMLNDVGIELIVLGVDFDDAEYGFKEEDKPRHKEQNEKILKTLVDHCESGAFGTMAQAVEELATPRIKSVRPFKAYDGPLTLGDPQKYPSALSIQVERYFKTKRATPPSASNVANPNGPPQTQVWNEDDGVPFSGVGLQPVKQLRTYRIEDSKAAGGKKDVDMEDLAKAYQYGRTVVPFGKSEEDYLKYETTKSFTIIGFVPMSSYEPFLNMGETGLIVAQKVNEEAELGLSALIHALHELESYAVARYVNKDKAPPQILLLKPNPAIEDDIECLYDIPLPFAEDVRSYQFPPLDKVLTITGNVLTEHRLLPNNDLQQAMSDYVDAMDLTEYGQDDDGHPAEYAPIDDLYNPVIHHMNQAIRNRAVNPDAPLPPVAEILTRFTHPPEPLLAKAKTEIDGLIQAAEVKKVPPKVQGKRGRKDTVKPLSGLDIDALLSETRPRTKKTPIISTENAIPEFKQILETAEDDETIEIAAKQMGNIICKLVSDSFADVLYPRAAENLRVMREELINMEVPTLYNKYITKLKESLLSGNLNGDRREMWFRWIVGGRLGLITQDESEVSEVSENEAKAFLK.

In terms of domain architecture, Ku spans 232–478; the sequence is LTLGDPQKYP…QQAMSDYVDA (247 aa).

This sequence belongs to the ku80 family. Heterodimer of mus-51/ku70 and mus-52/ku80.

It is found in the nucleus. It localises to the chromosome. Its subcellular location is the telomere. It carries out the reaction ATP + H2O = ADP + phosphate + H(+). Single-stranded DNA-dependent ATP-dependent helicase. Involved in non-homologous end joining (NHEJ) DNA double strand break repair. DNA-binding is sequence-independent but has a high affinity to nicks in double-stranded DNA and to the ends of duplex DNA. Binds to naturally occurring chromosomal ends, and therefore provides chromosomal end protection. Required also for telomere recombination to repair telomeric ends in the absence of telomerase. ku70, of the ku70/ku80 heterodimer, binds to the stem loop of tlc1, the RNA component of telomerase. Involved in telomere maintenance. Interacts with telomeric repeats and subtelomeric sequences thereby controlling telomere length and protecting against subtelomeric rearrangement. Maintains telomeric chromatin, which is involved in silencing the expression of genes located at the telomere. Required for mating-type switching. The sequence is that of ATP-dependent DNA helicase II subunit 2 (mus-52) from Neurospora crassa (strain ATCC 24698 / 74-OR23-1A / CBS 708.71 / DSM 1257 / FGSC 987).